The chain runs to 228 residues: 2-C-methyl-D-erythritol 4-phosphate cytidylyltransferase (228 aa).

Belongs to the IspD/TarI cytidylyltransferase family. IspD subfamily.

It carries out the reaction 2-C-methyl-D-erythritol 4-phosphate + CTP + H(+) = 4-CDP-2-C-methyl-D-erythritol + diphosphate. It functions in the pathway isoprenoid biosynthesis; isopentenyl diphosphate biosynthesis via DXP pathway; isopentenyl diphosphate from 1-deoxy-D-xylulose 5-phosphate: step 2/6. In terms of biological role, catalyzes the formation of 4-diphosphocytidyl-2-C-methyl-D-erythritol from CTP and 2-C-methyl-D-erythritol 4-phosphate (MEP). The chain is 2-C-methyl-D-erythritol 4-phosphate cytidylyltransferase from Nostoc sp. (strain PCC 7120 / SAG 25.82 / UTEX 2576).